The primary structure comprises 432 residues: Serine--tRNA ligase (432 aa).

Residue 236–238 (TSE) participates in L-serine binding. ATP is bound at residue 267–269 (RSE). An L-serine-binding site is contributed by glutamate 290. 354-357 (EISS) serves as a coordination point for ATP. Serine 390 is an L-serine binding site.

The protein belongs to the class-II aminoacyl-tRNA synthetase family. Type-1 seryl-tRNA synthetase subfamily. Homodimer. The tRNA molecule binds across the dimer.

It localises to the cytoplasm. It carries out the reaction tRNA(Ser) + L-serine + ATP = L-seryl-tRNA(Ser) + AMP + diphosphate + H(+). It catalyses the reaction tRNA(Sec) + L-serine + ATP = L-seryl-tRNA(Sec) + AMP + diphosphate + H(+). The protein operates within aminoacyl-tRNA biosynthesis; selenocysteinyl-tRNA(Sec) biosynthesis; L-seryl-tRNA(Sec) from L-serine and tRNA(Sec): step 1/1. Catalyzes the attachment of serine to tRNA(Ser). Is also able to aminoacylate tRNA(Sec) with serine, to form the misacylated tRNA L-seryl-tRNA(Sec), which will be further converted into selenocysteinyl-tRNA(Sec). The sequence is that of Serine--tRNA ligase from Pseudoalteromonas atlantica (strain T6c / ATCC BAA-1087).